A 153-amino-acid chain; its full sequence is Actin-related protein 2/3 complex subunit 5-like protein (153 aa).

Serine 64 is subject to Phosphoserine.

Belongs to the ARPC5 family. May be a component of the Arp2/3 complex in which it may replace ARPC5.

Its subcellular location is the cytoplasm. The protein localises to the cytoskeleton. The protein resides in the cell projection. In terms of biological role, may function as component of the Arp2/3 complex which is involved in regulation of actin polymerization and together with an activating nucleation-promoting factor (NPF) mediates the formation of branched actin networks. The protein is Actin-related protein 2/3 complex subunit 5-like protein (ARPC5L) of Bos taurus (Bovine).